A 412-amino-acid chain; its full sequence is MPLFFSLVLLILGLHCAPPNSCEGKITSCLSPQQNATLYKMSSINADFAFNLYRKVTVETPDQNIFFSPVSISAGLAMLSLGACSSTQTQILESLGFNLTDTPMAEIQQGFQHLICSLNFPKKELELQMGNALFIGKQLKPLEKFLDDVKNLYETEVFSTDFSNVSAAQQEINSHVERQTKGKIVGLIQDLKPNTITVLVNYLCFKAQWANPFDPSKTEEGSSFLVDKTTTVQVPMMHQVDQYYHLVDTELNCTVLQMDYSKNALALFVLPKEGQMEGVEGAMSSKILKKWNRLLQKGWVNLFVPKFSISATYDLGGILLKMGIQDAFADNADFSGLTKDNGLKVSNVAHKAMFYIGEKGTEAIPEVRFLNQPETTLLHPIIQFDRSFLLLILEKNTRSILFLGKVVDPTEV.

The first 16 residues, 1 to 16 (MPLFFSLVLLILGLHC), serve as a signal peptide directing secretion. N-linked (GlcNAc...) asparagine glycosylation is found at Asn35, Asn98, Asn164, and Asn252. Positions 292 and 395 each coordinate thyroxine.

This sequence belongs to the serpin family. Expressed by the liver and secreted in plasma.

Its subcellular location is the secreted. Functionally, major thyroid hormone transport protein in serum. The chain is Thyroxine-binding globulin (SERPINA7) from Ovis aries (Sheep).